The following is a 290-amino-acid chain: MADSTFLAPELSDTESMGEETVRFQELLLKASKELQQAQTARPDSTQIQPKPGFCVKTNSSEGKVFINICHSPSIPPPADVTEDELLQMLEEDQAGFRIPMSLGEPHAELDAKGQGCTAYDVAVNSNFYLRMQNSDFLRELVVTIAREGLEDKYGLQLNPEWRMLKYRSFLGSISQQNIRSQQRPRIQELGTLDASGSLGTCHGPERPHLNLWLEAPDLLLAEVDLPKLDGAQGLALEIGENRLVIGGPQQLYHLDATVPLRINSEASRAAFHRRRKQLMVSMPLLTASS.

3 positions are modified to phosphoserine: Ser-12, Ser-16, and Ser-173.

Belongs to the PIH1 family. In terms of assembly, component of the R2TP complex composed at least of RUVBL1, RUVBL2, RPAP3 and PIHD1. Component of the PAQosome complex which is responsible for the biogenesis of several protein complexes and which consists of R2TP complex members RUVBL1, RUVBL2, RPAP3 and PIH1D1, URI complex members PFDN2, PFDN6, PDRG1, UXT and URI1 as well as ASDURF, POLR2E and DNAAF10/WDR92. Interacts with phosphorylated TELO2. Mediates interaction of TELO2 with the R2TP complex. Interacts with phosphorylated ECD, EFTUD2/SNRP116, RPB1 and UBR5 and with RPB1 in a phosphorylation-independent manner. Interacts with the core C/D box snoRNP particle components NOP58 and FBL and with RUVBL1/TIP49. Interacts with RPAP3 and DNAAF10. Interacts with histone H4 and with SWI/SNF complex member SMARCB1/SNF5. Interacts with the mTORC1 complex member RPTOR. Interacts with isoform 1 of MSL1.

It localises to the nucleus. Its function is as follows. Involved in the assembly of C/D box small nucleolar ribonucleoprotein (snoRNP) particles. Recruits the SWI/SNF complex to the core promoter of rRNA genes and enhances pre-rRNA transcription. Mediates interaction of TELO2 with the R2TP complex which is necessary for the stability of MTOR and SMG1. Positively regulates the assembly and activity of the mTORC1 complex. The polypeptide is PIH1 domain-containing protein 1 (Pih1d1) (Mus musculus (Mouse)).